A 123-amino-acid chain; its full sequence is Amoebiasin-2 (123 aa).

A signal peptide spans Met-1 to Ala-16. The short motif at Asn-45–Tyr-50 is the BC loop element. The DE loop motif lies at Glu-71–Pro-81. The short motif at Pro-105 to Arg-114 is the FG loop element.

Belongs to the protease inhibitor I42 family. As to quaternary structure, monomer. May form homodimer. Interacts with cysteine protease CP2. Interacts with cysteine protease CP5.

The protein localises to the cytoplasmic vesicle. The protein resides in the lysosome. Its subcellular location is the phagosome. Functionally, cysteine protease inhibitor. Inhibits cysteine proteases CP1, CP2 and to a lesser extent CP5. This Entamoeba histolytica (strain ATCC 30459 / HM-1:IMSS / ABRM) protein is Amoebiasin-2.